The sequence spans 357 residues: Elongation factor Ts (357 aa).

Residues 82–85 (TDFV) form an involved in Mg(2+) ion dislocation from EF-Tu region.

The protein belongs to the EF-Ts family.

The protein resides in the cytoplasm. Associates with the EF-Tu.GDP complex and induces the exchange of GDP to GTP. It remains bound to the aminoacyl-tRNA.EF-Tu.GTP complex up to the GTP hydrolysis stage on the ribosome. In Campylobacter jejuni subsp. doylei (strain ATCC BAA-1458 / RM4099 / 269.97), this protein is Elongation factor Ts.